Consider the following 70-residue polypeptide: Small, acid-soluble spore protein alpha (70 aa).

Belongs to the alpha/beta-type SASP family.

Functionally, SASP are bound to spore DNA. They are double-stranded DNA-binding proteins that cause DNA to change to an a-like conformation. They protect the DNA backbone from chemical and enzymatic cleavage and are thus involved in dormant spore's high resistance to UV light. The polypeptide is Small, acid-soluble spore protein alpha (Paraclostridium bifermentans (Clostridium bifermentans)).